The following is a 516-amino-acid chain: Potassium voltage-gated channel subfamily A member 10 (516 aa).

A helical transmembrane segment spans residues 223-244 (VALVSVLVIVISIIIFCMETLP). N-linked (GlcNAc...) asparagine glycosylation is present at Asn261. A helical membrane pass occupies residues 276-296 (FFVIETACIIWFSFELFVRFI). A helical membrane pass occupies residues 308 to 328 (IMNIIDIVSIIPYFVTLTTEL). Residue Asn339 is glycosylated (N-linked (GlcNAc...) asparagine). Residues 344–363 (ILRIIRLVRVFRIFKLSRHS) form a helical; Voltage-sensor membrane-spanning segment. The helical transmembrane segment at 380–400 (LGLLIFFLFIGVILFSSAVYF) threads the bilayer. The Selectivity filter signature appears at 426–431 (TVGYGD). Residues 441 to 461 (IVGTLCAIAGVLTIALPVPVI) traverse the membrane as a helical segment. Residue Asn503 is glycosylated (N-linked (GlcNAc...) asparagine).

Belongs to the potassium channel family. A (Shaker) (TC 1.A.1.2) subfamily. Kv1.8/KCNA10 sub-subfamily. As to quaternary structure, homotetramer. In terms of tissue distribution, detected in brain, cochlear sensory epithelium, cochlear ganglion, tegumentum vasculosum. Detected at low levels in cochlear lagena.

It localises to the membrane. It catalyses the reaction K(+)(in) = K(+)(out). With respect to regulation, the channel activity is up-regulated by cAMP. In terms of biological role, voltage-gated potassium ion channel that mediates K(+) permeability of excitable membranes. When opened in response to the voltage difference across the membrane, KCNA10 channel selectively allows the flow of potassium ions across the membrane down their electrochemical gradient. The chain is Potassium voltage-gated channel subfamily A member 10 (KCNA10) from Gallus gallus (Chicken).